We begin with the raw amino-acid sequence, 581 residues long: Probable bifunctional SAT/APS kinase 2 (581 aa).

The tract at residues 1–200 is adenylsulfate kinase; sequence MSGFVVWFTG…AAGGARGLIA (200 aa). 10-17 is an ATP binding site; it reads GLSGAGKS. Serine 84 serves as the catalytic Phosphoserine intermediate. Residues 201-581 form a sulfate adenylyltransferase region; it reads PHGGELVNRW…ILIESMRSSS (381 aa).

It in the N-terminal section; belongs to the APS kinase family. In the C-terminal section; belongs to the sulfate adenylyltransferase family.

It catalyses the reaction sulfate + ATP + H(+) = adenosine 5'-phosphosulfate + diphosphate. The catalysed reaction is adenosine 5'-phosphosulfate + ATP = 3'-phosphoadenylyl sulfate + ADP + H(+). It participates in sulfur metabolism; hydrogen sulfide biosynthesis; sulfite from sulfate: step 1/3. The protein operates within sulfur metabolism; hydrogen sulfide biosynthesis; sulfite from sulfate: step 2/3. This chain is Probable bifunctional SAT/APS kinase 2 (sat2/cysC2), found in Sorangium cellulosum (strain So ce56) (Polyangium cellulosum (strain So ce56)).